A 220-amino-acid polypeptide reads, in one-letter code: UPF0502 protein VVA1225 (220 aa).

This sequence belongs to the UPF0502 family.

This Vibrio vulnificus (strain YJ016) protein is UPF0502 protein VVA1225.